Reading from the N-terminus, the 302-residue chain is Sulfate adenylyltransferase subunit 2 (302 aa).

A disordered region spans residues 280–302 (RQGRAIDHDQSGSMELKKRQGYF).

The protein belongs to the PAPS reductase family. CysD subfamily. In terms of assembly, heterodimer composed of CysD, the smaller subunit, and CysN.

It catalyses the reaction sulfate + ATP + H(+) = adenosine 5'-phosphosulfate + diphosphate. Its pathway is sulfur metabolism; hydrogen sulfide biosynthesis; sulfite from sulfate: step 1/3. Functionally, with CysN forms the ATP sulfurylase (ATPS) that catalyzes the adenylation of sulfate producing adenosine 5'-phosphosulfate (APS) and diphosphate, the first enzymatic step in sulfur assimilation pathway. APS synthesis involves the formation of a high-energy phosphoric-sulfuric acid anhydride bond driven by GTP hydrolysis by CysN coupled to ATP hydrolysis by CysD. The polypeptide is Sulfate adenylyltransferase subunit 2 (Vibrio cholerae serotype O1 (strain ATCC 39541 / Classical Ogawa 395 / O395)).